The primary structure comprises 506 residues: Tyrosine-protein kinase FRK (506 aa).

Positions 43–111 constitute an SH3 domain; that stretch reads SQGQYFVALF…PSNYVAEDRS (69 aa). The SH2 domain maps to 117–209; sequence WFFGAIKRAD…GLCVKLEKPC (93 aa). A Phosphothreonine modification is found at T179. Residues 235-492 form the Protein kinase domain; sequence IQLLKRLGSG…TLHWKLEDYF (258 aa). Residues 241 to 249 and K263 each bind ATP; that span reads LGSGQFGEV. The active-site Proton acceptor is the D355. Y388 carries the phosphotyrosine; by autocatalysis modification.

Belongs to the protein kinase superfamily. Tyr protein kinase family. SRC subfamily. Interacts (via the SH3-domain) with PTEN. Interacts with RB1. Highly expressed in stomach, small intestine and colon. Concentrated in the brush border membranes of epithelial cells, throughout the maturation axis of the adult small intestine.

Its subcellular location is the cytoplasm. It localises to the nucleus. It catalyses the reaction L-tyrosyl-[protein] + ATP = O-phospho-L-tyrosyl-[protein] + ADP + H(+). Its function is as follows. Non-receptor tyrosine-protein kinase that negatively regulates cell proliferation. Positively regulates PTEN protein stability through phosphorylation of PTEN on 'Tyr-336', which in turn prevents its ubiquitination and degradation, possibly by reducing its binding to NEDD4. May function as a tumor suppressor. The polypeptide is Tyrosine-protein kinase FRK (Frk) (Rattus norvegicus (Rat)).